The sequence spans 199 residues: Elongation factor Ts (199 aa).

An involved in Mg(2+) ion dislocation from EF-Tu region spans residues 81–84 (TDFV).

This sequence belongs to the EF-Ts family.

The protein resides in the cytoplasm. Associates with the EF-Tu.GDP complex and induces the exchange of GDP to GTP. It remains bound to the aminoacyl-tRNA.EF-Tu.GTP complex up to the GTP hydrolysis stage on the ribosome. The sequence is that of Elongation factor Ts from Thermotoga sp. (strain RQ2).